Here is a 125-residue protein sequence, read N- to C-terminus: Small ribosomal subunit protein uS12 (125 aa).

Positions 1–28 (MPTISQLIGSERKRLTRKTKSPALKSCP) are disordered. D89 is subject to 3-methylthioaspartic acid. Residues 104–125 (TAGVKDRRQSRSKYGAKAPKNN) form a disordered region.

Belongs to the universal ribosomal protein uS12 family. In terms of assembly, part of the 30S ribosomal subunit. Contacts proteins S8 and S17. May interact with IF1 in the 30S initiation complex.

Its function is as follows. With S4 and S5 plays an important role in translational accuracy. Functionally, interacts with and stabilizes bases of the 16S rRNA that are involved in tRNA selection in the A site and with the mRNA backbone. Located at the interface of the 30S and 50S subunits, it traverses the body of the 30S subunit contacting proteins on the other side and probably holding the rRNA structure together. The combined cluster of proteins S8, S12 and S17 appears to hold together the shoulder and platform of the 30S subunit. This is Small ribosomal subunit protein uS12 from Prochlorococcus marinus (strain MIT 9515).